The following is a 572-amino-acid chain: MCGIFAAFRHEDVHRYKPKALQLSKRIRHRGPDWSGNAIKNSTIFVHERLAIVGVESGAQPITSSDGEYMLCVNGEIYNHIQLREECADYEFGTLSDCEPIIPMYLKHDIDAPKYLDGMFAWTLYDAKQDRIVAARDPIGITTLYMGRSSASPKTVYFASELKCLTDDCDTITAFPPGHVYDSKTDKITRYFTPDWLDEKRIPSTPIDYMAIRHSLEKAVRKRLMAEVPYGVLLSGGLDSSLIASIAARETAKATNDVEPSTYDSKARHLAGIDDDGKLHTAGWTSLHSFAIGLPNAPDLQAARKVAKFIGSIHHEHTFTLQEGLDALDDVIYHLETYDVTTIRASTPMFLLSRKIKAQGVKMVLSGEGSDEIFGGYLYFAQAPSAAEFHTESVQRVKNLHLADCLRANKSTMAWGLEARVPFLDREFLQLCMNIDPNEKMIKPKEGRIEKYILRKAFDTTGEPDAKPYLPEEILWRQKEQFSDGVGYSWIDGLKDTAEAVISDEMFASPKAEWGSDIPTTKEAFWYRLKFDALFPQKTVADTVMRWIPKADWGCAEDPSGRYAQIHEKHIE.

Catalysis depends on cysteine 2, which acts as the For GATase activity. The Glutamine amidotransferase type-2 domain occupies 2–186 (CGIFAAFRHE…PGHVYDSKTD (185 aa)). Residues 49-53 (RLAIV), 74-76 (NGE), and aspartate 97 each bind L-glutamine. Positions 194–546 (PDWLDEKRIP…QKTVADTVMR (353 aa)) constitute an Asparagine synthetase domain. Residue leucine 233 participates in ATP binding. Residue serine 265 is modified to Phosphoserine. Residues isoleucine 292 and 366–367 (SG) each bind ATP. Phosphoserine is present on serine 509.

The enzyme catalyses L-aspartate + L-glutamine + ATP + H2O = L-asparagine + L-glutamate + AMP + diphosphate + H(+). Its pathway is amino-acid biosynthesis; L-asparagine biosynthesis; L-asparagine from L-aspartate (L-Gln route): step 1/1. In Saccharomyces cerevisiae (strain ATCC 204508 / S288c) (Baker's yeast), this protein is Asparagine synthetase [glutamine-hydrolyzing] 1 (ASN1).